A 492-amino-acid polypeptide reads, in one-letter code: MEINPFALGVSTLVEKNVGYITQIIGPVLDVAFPPGKMPNIYNSSIIKGKNPAGQEMNVTCEVQQLLGNNKVRAVAMSATDGLTREMKVVDTGAPLSVPVGEATLGRIFNVLGEPVDNLGSVDAGTTSPIHRSAPAFAQSDTKLSIFETGIKVVDLLAPYRRGGKIGLFGGAGVGKTVLIMELINNIAKAHGGVSVFGGVGERTREGNDLYMEMKESKVINEQNISESKVALVYGQMNEPPGARMRVGLTALTMAEYFRDVNKQDVLLFIDNILRFVQAGSEVSALLGRMPSAVGYQPTLGTEMGSLQERITSTKEGSITSIQAVYVPADDLTDPAPATTFAHLDATTVLSRGLAAKGIYPAVDPSDSTPTMLQPWIVGEQHYETAQEVKQTLQRYKELQDIIAILGLDESSEEDRLTVARARKIERFLSQPFFVAEVFTGSPGKYVTLVETIKGFQMILSGELDNLPEQAFYLVGDINEATAKAATSQVEN.

Position 170 to 177 (170 to 177 (GGAGVGKT)) interacts with ATP.

Belongs to the ATPase alpha/beta chains family. As to quaternary structure, F-type ATPases have 2 components, CF(1) - the catalytic core - and CF(0) - the membrane proton channel. CF(1) has five subunits: alpha(3), beta(3), gamma(1), delta(1), epsilon(1). CF(0) has four main subunits: a(1), b(1), b'(1) and c(9-12).

The protein localises to the plastid. Its subcellular location is the chloroplast thylakoid membrane. The catalysed reaction is ATP + H2O + 4 H(+)(in) = ADP + phosphate + 5 H(+)(out). Functionally, produces ATP from ADP in the presence of a proton gradient across the membrane. The catalytic sites are hosted primarily by the beta subunits. This chain is ATP synthase subunit beta, chloroplastic, found in Huperzia lucidula (Shining clubmoss).